The following is a 262-amino-acid chain: Aminoglycoside (3'') (9) adenylyltransferase (262 aa).

It carries out the reaction streptomycin + ATP = 3''-O-adenylylstreptomycin + diphosphate. It catalyses the reaction spectinomycin + ATP = 9-O-adenylylspectinomycin + diphosphate. In terms of biological role, mediates bacterial resistance to the antibiotics streptomycin and spectinomycin. This is Aminoglycoside (3'') (9) adenylyltransferase from Shigella flexneri.